Reading from the N-terminus, the 376-residue chain is Proton extrusion protein PxcA (376 aa).

The next 4 helical transmembrane spans lie at 150-170 (TLIS…VQQM), 251-271 (AVKN…VCII), 299-319 (IILF…QVLL), and 334-354 (FILL…KYWI).

Belongs to the CemA family.

The protein resides in the cell inner membrane. Its function is as follows. Required for H(+) efflux immediately after light irradiation to form a rapid H(+) concentration gradient across the thylakoid membranes. Together with PxcL, contributes to transient H(+) uptake following dark to light transition. The chain is Proton extrusion protein PxcA from Prochlorococcus marinus (strain MIT 9303).